Here is a 260-residue protein sequence, read N- to C-terminus: Carbonic anhydrase 3 (260 aa).

Ala-2 carries the post-translational modification N-acetylalanine. In terms of domain architecture, Alpha-carbonic anhydrase spans 3-259; the sequence is KEWGYADHNG…IKGRIVKASF (257 aa). Phosphoserine occurs at positions 29, 43, 50, and 55. The tract at residues 64–67 is involved in proton transfer; the sequence is KTCR. The residue at position 73 (Thr-73) is a Phosphothreonine. 3 residues coordinate Zn(2+): His-94, His-96, and His-119. Tyr-127 bears the Phosphotyrosine mark. Position 176 is a phosphothreonine (Thr-176). S-glutathionyl cysteine is present on residues Cys-182 and Cys-187. Residue 198-199 coordinates substrate; it reads TT. Residue Thr-216 is modified to Phosphothreonine. Ser-219 is subject to Phosphoserine.

This sequence belongs to the alpha-carbonic anhydrase family. Zn(2+) is required as a cofactor. Post-translationally, S-thiolated both by thiol-disulfide exchange with glutathione disulfide and by oxyradical-initiated S-thiolation with reduced glutathione. S-glutathionylated in hepatocytes under oxidative stress.

Its subcellular location is the cytoplasm. The enzyme catalyses hydrogencarbonate + H(+) = CO2 + H2O. With respect to regulation, inhibited by acetazolamide. Its function is as follows. Reversible hydration of carbon dioxide. The protein is Carbonic anhydrase 3 of Sus scrofa (Pig).